Consider the following 74-residue polypeptide: Large ribosomal subunit protein bL31 (74 aa).

This sequence belongs to the bacterial ribosomal protein bL31 family. Type A subfamily. Part of the 50S ribosomal subunit.

In terms of biological role, binds the 23S rRNA. This is Large ribosomal subunit protein bL31 from Afipia carboxidovorans (strain ATCC 49405 / DSM 1227 / KCTC 32145 / OM5) (Oligotropha carboxidovorans).